Reading from the N-terminus, the 298-residue chain is U1 small nuclear ribonucleoprotein A (298 aa).

RRM domains are found at residues 2–113 and 227–298; these read SALY…KART and KVLL…GFAK.

It belongs to the RRM U1 A/B'' family. As to quaternary structure, component of the spliceosome where it is associated with snRNP U1.

The protein localises to the nucleus. Functionally, involved in nuclear mRNA splicing. The principal role of the U1A is to help fold or maintain U1 RNA in an active configuration. It is the first snRNP to interact with pre-mRNA. This interaction is required for the subsequent binding of U2 snRNP and the U4/U6/U5 tri-snRNP. The sequence is that of U1 small nuclear ribonucleoprotein A (MUD1) from Saccharomyces cerevisiae (strain ATCC 204508 / S288c) (Baker's yeast).